The chain runs to 1066 residues: Hemoglobin and hemoglobin-haptoglobin-binding protein C (1066 aa).

The first 24 residues, 1 to 24 (MTNFKFTLLARSIAFALNASTAYA), serve as a signal peptide directing secretion. Repeat copies occupy residues 26–29 (QPTN), 30–33 (QPTN), 34–37 (QPTN), 38–41 (QPTN), 42–45 (QPTN), 46–49 (QPTN), and 50–53 (QPTN). Residues 26–53 (QPTNQPTNQPTNQPTNQPTNQPTNQPTN) form a 7 X 4 AA tandem repeats of Q-P-T-N region. Residues 26–54 (QPTNQPTNQPTNQPTNQPTNQPTNQPTNQ) show a composition bias toward low complexity. Residues 26–57 (QPTNQPTNQPTNQPTNQPTNQPTNQPTNQDSN) form a disordered region. The TonB box motif lies at 63–70 (EQINVSGS). A TBDR plug domain is found at 66–200 (NVSGSTETIN…LGGSVIFETK (135 aa)). Residues 208-1066 (DKDYYVSYKR…NYRMSVQFEF (859 aa)) enclose the TBDR beta-barrel domain. The TonB C-terminal box motif lies at 1049–1066 (NRLYAPGRNYRMSVQFEF).

The protein belongs to the TonB-dependent receptor family. Hemoglobin/haptoglobin binding protein subfamily.

It localises to the cell outer membrane. Acts as a receptor for hemoglobin or the hemoglobin/haptoglobin complex of the human host and is required for heme uptake. The protein is Hemoglobin and hemoglobin-haptoglobin-binding protein C (hgpC) of Haemophilus influenzae.